A 311-amino-acid polypeptide reads, in one-letter code: Probable manganese-dependent inorganic pyrophosphatase (311 aa).

His-9, Asp-13, Asp-15, Asp-75, His-97, and Asp-149 together coordinate Mn(2+).

This sequence belongs to the PPase class C family. Requires Mn(2+) as cofactor.

The protein resides in the cytoplasm. The enzyme catalyses diphosphate + H2O = 2 phosphate + H(+). The chain is Probable manganese-dependent inorganic pyrophosphatase from Lactobacillus acidophilus (strain ATCC 700396 / NCK56 / N2 / NCFM).